The following is a 209-amino-acid chain: Protein GrpE (209 aa).

It belongs to the GrpE family. As to quaternary structure, homodimer.

It localises to the cytoplasm. Its function is as follows. Participates actively in the response to hyperosmotic and heat shock by preventing the aggregation of stress-denatured proteins, in association with DnaK and GrpE. It is the nucleotide exchange factor for DnaK and may function as a thermosensor. Unfolded proteins bind initially to DnaJ; upon interaction with the DnaJ-bound protein, DnaK hydrolyzes its bound ATP, resulting in the formation of a stable complex. GrpE releases ADP from DnaK; ATP binding to DnaK triggers the release of the substrate protein, thus completing the reaction cycle. Several rounds of ATP-dependent interactions between DnaJ, DnaK and GrpE are required for fully efficient folding. The polypeptide is Protein GrpE (Colwellia psychrerythraea (strain 34H / ATCC BAA-681) (Vibrio psychroerythus)).